The primary structure comprises 323 residues: MFARQSLRVAQPLKQGFRKYSTEAPSKGKSSLAPIYLGVGLIGLGVGLYRYNSASAEAPPAERPKVFTGGDQGWVDLKLAQIENLSPNTKRLRFEFPDKEAVSGLHVASALLTKFKPQGAEKPVIRPYTPVSDEEQPGYLDLVVKVYPNGPMSEHLHSMNVDQRLEFKGPIPKYPWEANKHKHICLIAGGTGITPMYQLARKIFKDPEDQTKVTLVFGNVREEDILLKKELEELENTYPRRFRAFYLLDHPPKEWTGGKGYITKELLKTVLPEPKEENIKIFVCGPPGMYKSISGPKVSPTDQGELTGILAELGYSKDQVFKF.

Residues 32–48 (LAPIYLGVGLIGLGVGL) form a helical membrane-spanning segment. Residues 72 to 177 (QGWVDLKLAQ…KGPIPKYPWE (106 aa)) form the FAD-binding FR-type domain. Residue 180–215 (KHKHICLIAGGTGITPMYQLARKIFKDPEDQTKVTL) coordinates FAD.

The protein belongs to the flavoprotein pyridine nucleotide cytochrome reductase family. FAD is required as a cofactor.

It is found in the mitochondrion outer membrane. It catalyses the reaction 2 Fe(III)-[cytochrome b5] + NADH = 2 Fe(II)-[cytochrome b5] + NAD(+) + H(+). May mediate the reduction of outer membrane cytochrome b5. The polypeptide is NADH-cytochrome b5 reductase 2 (mcr1) (Aspergillus fumigatus (strain ATCC MYA-4609 / CBS 101355 / FGSC A1100 / Af293) (Neosartorya fumigata)).